The sequence spans 201 residues: MELVLKDAQSALTVSETTFGRDFNEALVHQVVVAYAAGARQGTRAQKTRAEVTGSGKKPWRQKGTGRARSGSIKSPIWRSGGVTFAARPQDHSQKVNKKMYRGALKSILSELVRQDRLIVVEKFSVEAPKTKLLAQKLKDMALEDVLIITGELDENLFLAARNLQKVDVRDATGIDPVSLIAFDKVVMTADAVKQVEEMLA.

Positions 44–71 (RAQKTRAEVTGSGKKPWRQKGTGRARSG) are disordered.

It belongs to the universal ribosomal protein uL4 family. As to quaternary structure, part of the 50S ribosomal subunit.

Functionally, one of the primary rRNA binding proteins, this protein initially binds near the 5'-end of the 23S rRNA. It is important during the early stages of 50S assembly. It makes multiple contacts with different domains of the 23S rRNA in the assembled 50S subunit and ribosome. Forms part of the polypeptide exit tunnel. This is Large ribosomal subunit protein uL4 from Shigella flexneri serotype 5b (strain 8401).